A 335-amino-acid chain; its full sequence is Urokinase plasminogen activator surface receptor (335 aa).

The signal sequence occupies residues 1-22; sequence MGHPPLLPLLLLLHTCVPASWG. UPAR/Ly6 domains lie at 23 to 114, 115 to 213, and 214 to 305; these read LRCM…RSRY, LECI…PQNG, and RQCY…YRSG. 3 cysteine pairs are disulfide-bonded: Cys25/Cys46, Cys28/Cys34, and Cys39/Cys67. Asn74 carries N-linked (GlcNAc...) asparagine glycosylation. Disulfide bonds link Cys93-Cys98, Cys117-Cys144, Cys120-Cys127, Cys137-Cys169, Cys175-Cys192, Cys193-Cys198, Cys216-Cys244, Cys219-Cys227, Cys237-Cys263, Cys269-Cys287, and Cys288-Cys293. Asn124 is a glycosylation site (N-linked (GlcNAc...) asparagine). Residues Asn184, Asn194, Asn222, and Asn255 are each glycosylated (N-linked (GlcNAc...) asparagine). The GPI-anchor amidated glycine moiety is linked to residue Gly305. Residues 306-335 constitute a propeptide, removed in mature form; it reads AAPQPGPAHLSLTITLLMTARLWGGTLLWT.

Monomer. Interacts (via the UPAR/Ly6 domains) with SRPX2. Interacts with MRC2. Interacts with FAP (seprase); the interaction occurs at the cell surface of invadopodia membrane. Interacts with SORL1 (via N-terminal ectodomain); this interaction decreases PLAUR internalization. The ternary complex composed of PLAUR-PLAU-SERPINE1 also interacts with SORL1. Interacts with CD82; this interaction prevents PLAUR from binding to its high affinity ligand PLAU.

Its subcellular location is the cell membrane. The protein localises to the cell projection. The protein resides in the invadopodium membrane. Functionally, acts as a receptor for urokinase plasminogen activator. Plays a role in localizing and promoting plasmin formation. Mediates the proteolysis-independent signal transduction activation effects of U-PA. It is subject to negative-feedback regulation by U-PA which cleaves it into an inactive form. The protein is Urokinase plasminogen activator surface receptor (PLAUR) of Pan troglodytes (Chimpanzee).